The following is a 397-amino-acid chain: Elongation factor Tu (397 aa).

Residues 10 to 207 (KPHVNVGTVG…AIDAYVPDPV (198 aa)) form the tr-type G domain. The interval 19 to 26 (GHIDHGKT) is G1. 19–26 (GHIDHGKT) is a GTP binding site. Mg(2+) is bound at residue threonine 26. A G2 region spans residues 60–64 (GITIA). Positions 81 to 84 (DCPG) are G3. GTP is bound by residues 81 to 85 (DCPGH) and 136 to 139 (NKVD). The tract at residues 136-139 (NKVD) is G4. Residues 174-176 (SAL) form a G5 region.

It belongs to the TRAFAC class translation factor GTPase superfamily. Classic translation factor GTPase family. EF-Tu/EF-1A subfamily. As to quaternary structure, monomer.

It is found in the cytoplasm. The enzyme catalyses GTP + H2O = GDP + phosphate + H(+). GTP hydrolase that promotes the GTP-dependent binding of aminoacyl-tRNA to the A-site of ribosomes during protein biosynthesis. This chain is Elongation factor Tu, found in Syntrophobacter fumaroxidans (strain DSM 10017 / MPOB).